Here is a 168-residue protein sequence, read N- to C-terminus: Probable acetolactate synthase small subunit (168 aa).

One can recognise an ACT domain in the interval 10–84 (IISALVEHKP…DVIKVRDLEP (75 aa)).

This sequence belongs to the acetolactate synthase small subunit family. In terms of assembly, dimer of large and small chains.

The enzyme catalyses 2 pyruvate + H(+) = (2S)-2-acetolactate + CO2. The protein operates within amino-acid biosynthesis; L-isoleucine biosynthesis; L-isoleucine from 2-oxobutanoate: step 1/4. It participates in amino-acid biosynthesis; L-valine biosynthesis; L-valine from pyruvate: step 1/4. The sequence is that of Probable acetolactate synthase small subunit (ilvH) from Methanothermobacter thermautotrophicus (strain ATCC 29096 / DSM 1053 / JCM 10044 / NBRC 100330 / Delta H) (Methanobacterium thermoautotrophicum).